The chain runs to 282 residues: RNA-4 uncharacterized 31.9 kDa protein (282 aa).

The chain is RNA-4 uncharacterized 31.9 kDa protein from Beta macrocarpa (Beet).